The sequence spans 277 residues: Undecaprenyl-diphosphatase (277 aa).

The next 7 helical transmembrane spans lie at 5-25 (WTAAQALILGVVEGLTEFLPI), 44-64 (RAMAFNIIIQLGAILAVVWEF), 86-106 (LNLLIAFMPAVVLGVIFADTI), 110-130 (LFNAITVATALVVGGVIMLWA), 184-204 (AATEFSFFLAMPTMVGAAVYS), 219-239 (VFAIGFITSFIFAMIAVRALL), and 255-275 (IAFGLLILATWQFGWIDWASA).

Belongs to the UppP family.

It is found in the cell inner membrane. The catalysed reaction is di-trans,octa-cis-undecaprenyl diphosphate + H2O = di-trans,octa-cis-undecaprenyl phosphate + phosphate + H(+). Its function is as follows. Catalyzes the dephosphorylation of undecaprenyl diphosphate (UPP). Confers resistance to bacitracin. This chain is Undecaprenyl-diphosphatase, found in Pseudomonas savastanoi pv. phaseolicola (strain 1448A / Race 6) (Pseudomonas syringae pv. phaseolicola (strain 1448A / Race 6)).